Reading from the N-terminus, the 310-residue chain is Putative S-adenosyl-L-methionine-dependent methyltransferase ML2640 (310 aa).

S-adenosyl-L-methionine contacts are provided by residues aspartate 132 and 161-162 (DL).

This sequence belongs to the UPF0677 family.

Exhibits S-adenosyl-L-methionine-dependent methyltransferase activity. The protein is Putative S-adenosyl-L-methionine-dependent methyltransferase ML2640 of Mycobacterium leprae (strain TN).